The following is a 226-amino-acid chain: MVSAIVLAGGRGKRMGNIQSKQYIDLNGAPILYYTLKQFIENDLIDKIILVVPEDEKDYCKREVLNKYGLKIDDLVSGGNERQESVYNALEKLEKSDIVLIHDGARPFVSQKIINYAVEYAKRYKAAAPGVMPKDTIKIKDSNNFSVDTLVRSELVAIQTPQAFDFNLIYECHKEIKKRCISVTDDTSVVELLGHKVYIYEGDYKNIKITTPEDLILAEYFVKNIV.

This sequence belongs to the IspD/TarI cytidylyltransferase family. IspD subfamily.

The catalysed reaction is 2-C-methyl-D-erythritol 4-phosphate + CTP + H(+) = 4-CDP-2-C-methyl-D-erythritol + diphosphate. The protein operates within isoprenoid biosynthesis; isopentenyl diphosphate biosynthesis via DXP pathway; isopentenyl diphosphate from 1-deoxy-D-xylulose 5-phosphate: step 2/6. Functionally, catalyzes the formation of 4-diphosphocytidyl-2-C-methyl-D-erythritol from CTP and 2-C-methyl-D-erythritol 4-phosphate (MEP). This Clostridium beijerinckii (strain ATCC 51743 / NCIMB 8052) (Clostridium acetobutylicum) protein is 2-C-methyl-D-erythritol 4-phosphate cytidylyltransferase.